The following is a 441-amino-acid chain: Enolase (441 aa).

Gln163 is a binding site for (2R)-2-phosphoglycerate. The active-site Proton donor is Glu205. Residues Asp242, Glu288, and Asp315 each contribute to the Mg(2+) site. Residues Lys340, Arg369, Ser370, and Lys391 each contribute to the (2R)-2-phosphoglycerate site. The active-site Proton acceptor is the Lys340.

It belongs to the enolase family. Mg(2+) is required as a cofactor.

The protein localises to the cytoplasm. It is found in the secreted. It localises to the cell surface. The catalysed reaction is (2R)-2-phosphoglycerate = phosphoenolpyruvate + H2O. It functions in the pathway carbohydrate degradation; glycolysis; pyruvate from D-glyceraldehyde 3-phosphate: step 4/5. In terms of biological role, catalyzes the reversible conversion of 2-phosphoglycerate (2-PG) into phosphoenolpyruvate (PEP). It is essential for the degradation of carbohydrates via glycolysis. This is Enolase from Ligilactobacillus salivarius (strain UCC118) (Lactobacillus salivarius).